A 341-amino-acid chain; its full sequence is Anthranilate phosphoribosyltransferase (341 aa).

5-phospho-alpha-D-ribose 1-diphosphate contacts are provided by residues G85, 88–89 (GD), T93, 95–98 (NIST), 113–121 (KHGNRSASG), and S125. Residue G85 coordinates anthranilate. S97 serves as a coordination point for Mg(2+). N116 lines the anthranilate pocket. Residue R171 participates in anthranilate binding. D230 and E231 together coordinate Mg(2+).

This sequence belongs to the anthranilate phosphoribosyltransferase family. Homodimer. The cofactor is Mg(2+).

The enzyme catalyses N-(5-phospho-beta-D-ribosyl)anthranilate + diphosphate = 5-phospho-alpha-D-ribose 1-diphosphate + anthranilate. Its pathway is amino-acid biosynthesis; L-tryptophan biosynthesis; L-tryptophan from chorismate: step 2/5. In terms of biological role, catalyzes the transfer of the phosphoribosyl group of 5-phosphorylribose-1-pyrophosphate (PRPP) to anthranilate to yield N-(5'-phosphoribosyl)-anthranilate (PRA). This Prochlorococcus marinus (strain SARG / CCMP1375 / SS120) protein is Anthranilate phosphoribosyltransferase.